The primary structure comprises 407 residues: 1-deoxy-D-xylulose 5-phosphate reductoisomerase (407 aa).

NADPH contacts are provided by Thr-10, Gly-11, Ser-12, Ile-13, Gly-36, and Asn-131. Lys-132 is a binding site for 1-deoxy-D-xylulose 5-phosphate. Glu-133 is a binding site for NADPH. Asp-155 serves as a coordination point for Mn(2+). The 1-deoxy-D-xylulose 5-phosphate site is built by Ser-156, Glu-157, Ser-181, and His-204. Mn(2+) is bound at residue Glu-157. Residue Gly-210 participates in NADPH binding. The 1-deoxy-D-xylulose 5-phosphate site is built by Ser-217, Asn-222, Lys-223, and Glu-226. Residue Glu-226 participates in Mn(2+) binding.

This sequence belongs to the DXR family. The cofactor is Mg(2+). Requires Mn(2+) as cofactor.

It catalyses the reaction 2-C-methyl-D-erythritol 4-phosphate + NADP(+) = 1-deoxy-D-xylulose 5-phosphate + NADPH + H(+). The protein operates within isoprenoid biosynthesis; isopentenyl diphosphate biosynthesis via DXP pathway; isopentenyl diphosphate from 1-deoxy-D-xylulose 5-phosphate: step 1/6. Catalyzes the NADPH-dependent rearrangement and reduction of 1-deoxy-D-xylulose-5-phosphate (DXP) to 2-C-methyl-D-erythritol 4-phosphate (MEP). In Cutibacterium acnes (strain DSM 16379 / KPA171202) (Propionibacterium acnes), this protein is 1-deoxy-D-xylulose 5-phosphate reductoisomerase.